We begin with the raw amino-acid sequence, 608 residues long: Protoheme IX farnesyltransferase (608 aa).

A COX15/CtaA region spans residues 1–304; it reads MKTPAWSRLA…VFLATSALER (304 aa). The next 17 membrane-spanning stretches (helical) occupy residues 10–30, 67–87, 99–119, 139–159, 167–187, 220–240, 252–272, 277–297, 338–357, 362–384, 411–431, 432–452, 460–480, 488–508, 530–550, 555–575, and 584–604; these read AGYA…GAYV, ATSG…LRAF, LALF…LFGW, TYFL…GGPL, VGLA…SGAV, VLHP…GYLV, LAQG…INVA, VWMQ…FVFL, VISL…AKGW, VFLA…NMVV, LLFA…GANL, LAAT…TLYL, IVIG…AVTG, YLFA…ALMI, VIQI…PLLL, LLYL…SLAL, and AVSL…AMAV. The segment at 339–606 is protoheme IX prenyltransferase; that stretch reads ISLLLFTALF…LLFAAMAVDR (268 aa).

This sequence in the N-terminal section; belongs to the COX15/CtaA family. It in the C-terminal section; belongs to the UbiA prenyltransferase family. Protoheme IX farnesyltransferase subfamily.

It localises to the cell inner membrane. It carries out the reaction heme b + (2E,6E)-farnesyl diphosphate + H2O = Fe(II)-heme o + diphosphate. It functions in the pathway porphyrin-containing compound metabolism; heme O biosynthesis; heme O from protoheme: step 1/1. Its function is as follows. Converts heme B (protoheme IX) to heme O by substitution of the vinyl group on carbon 2 of heme B porphyrin ring with a hydroxyethyl farnesyl side group. The sequence is that of Protoheme IX farnesyltransferase (ctaB) from Thermus thermophilus (strain ATCC BAA-163 / DSM 7039 / HB27).